The sequence spans 501 residues: Cytochrome P450 71B3 (501 aa).

A helical membrane pass occupies residues serine 2 to phenylalanine 22. Cysteine 445 contributes to the heme binding site.

It belongs to the cytochrome P450 family. Heme serves as cofactor.

The protein resides in the membrane. The protein is Cytochrome P450 71B3 (CYP71B3) of Arabidopsis thaliana (Mouse-ear cress).